Reading from the N-terminus, the 396-residue chain is Elongation factor Tu (396 aa).

The tr-type G domain occupies 10–205 (KPHVNIGTIG…AVDSYIPTPE (196 aa)). A G1 region spans residues 19-26 (GHVDHGKT). 19–26 (GHVDHGKT) contributes to the GTP binding site. Thr26 is a Mg(2+) binding site. A G2 region spans residues 60–64 (GITIN). A G3 region spans residues 81–84 (DCPG). GTP contacts are provided by residues 81-85 (DCPGH) and 136-139 (NKCD). The tract at residues 136–139 (NKCD) is G4. The segment at 174 to 176 (SAK) is G5.

This sequence belongs to the TRAFAC class translation factor GTPase superfamily. Classic translation factor GTPase family. EF-Tu/EF-1A subfamily. In terms of assembly, monomer.

Its subcellular location is the cytoplasm. The catalysed reaction is GTP + H2O = GDP + phosphate + H(+). GTP hydrolase that promotes the GTP-dependent binding of aminoacyl-tRNA to the A-site of ribosomes during protein biosynthesis. This chain is Elongation factor Tu, found in Brevibacillus brevis (strain 47 / JCM 6285 / NBRC 100599).